Here is a 156-residue protein sequence, read N- to C-terminus: S-ribosylhomocysteine lyase (156 aa).

Fe cation-binding residues include H54, H58, and C126.

Belongs to the LuxS family. As to quaternary structure, homodimer. Fe cation is required as a cofactor.

The enzyme catalyses S-(5-deoxy-D-ribos-5-yl)-L-homocysteine = (S)-4,5-dihydroxypentane-2,3-dione + L-homocysteine. Functionally, involved in the synthesis of autoinducer 2 (AI-2) which is secreted by bacteria and is used to communicate both the cell density and the metabolic potential of the environment. The regulation of gene expression in response to changes in cell density is called quorum sensing. Catalyzes the transformation of S-ribosylhomocysteine (RHC) to homocysteine (HC) and 4,5-dihydroxy-2,3-pentadione (DPD). The chain is S-ribosylhomocysteine lyase from Shouchella clausii (strain KSM-K16) (Alkalihalobacillus clausii).